The following is a 585-amino-acid chain: Arginine--tRNA ligase (585 aa).

The 'HIGH' region motif lies at 126–136 (PNIAKEMHVGH).

The protein belongs to the class-I aminoacyl-tRNA synthetase family. In terms of assembly, monomer.

The protein resides in the cytoplasm. The catalysed reaction is tRNA(Arg) + L-arginine + ATP = L-arginyl-tRNA(Arg) + AMP + diphosphate. The protein is Arginine--tRNA ligase of Cyanothece sp. (strain PCC 7425 / ATCC 29141).